The following is a 183-amino-acid chain: Tetrahydromethanopterin S-methyltransferase subunit A 2 (183 aa).

Topologically, residues 1-101 (MFLMVEKKPV…TMKALHSNGV (101 aa)) are cytoplasmic. Histidine 87 provides a ligand contact to 5-hydroxybenzimidazolylcob(I)amide. The chain crosses the membrane as a helical span at residues 102–118 (DLETGRIIGATGAIPYI). Residues 119–183 (ENMPEEAIER…IGKGDSEENT (65 aa)) are Extracellular-facing.

The protein belongs to the MtrA family. In terms of assembly, the complex is composed of 8 subunits; MtrA, MtrB, MtrC, MtrD, MtrE, MtrF, MtrG and MtrH. Requires 5-hydroxybenzimidazolylcob(I)amide as cofactor.

It is found in the cell membrane. The enzyme catalyses 5-methyl-5,6,7,8-tetrahydromethanopterin + coenzyme M + 2 Na(+)(in) = 5,6,7,8-tetrahydromethanopterin + methyl-coenzyme M + 2 Na(+)(out). It functions in the pathway one-carbon metabolism; methanogenesis from CO(2); methyl-coenzyme M from 5,10-methylene-5,6,7,8-tetrahydromethanopterin: step 2/2. Part of a complex that catalyzes the formation of methyl-coenzyme M and tetrahydromethanopterin from coenzyme M and methyl-tetrahydromethanopterin. This is an energy-conserving, sodium-ion translocating step. The polypeptide is Tetrahydromethanopterin S-methyltransferase subunit A 2 (Methanothermobacter thermautotrophicus (strain ATCC 29096 / DSM 1053 / JCM 10044 / NBRC 100330 / Delta H) (Methanobacterium thermoautotrophicum)).